Consider the following 173-residue polypeptide: 6,7-dimethyl-8-ribityllumazine synthase (173 aa).

5-amino-6-(D-ribitylamino)uracil-binding positions include Tyr34, 65 to 67 (ALE), and 94 to 96 (CVI). 99 to 100 (ET) contacts (2S)-2-hydroxy-3-oxobutyl phosphate. Residue His102 is the Proton donor of the active site. Asn127 is a binding site for 5-amino-6-(D-ribitylamino)uracil. Arg141 serves as a coordination point for (2S)-2-hydroxy-3-oxobutyl phosphate.

The protein belongs to the DMRL synthase family.

The enzyme catalyses (2S)-2-hydroxy-3-oxobutyl phosphate + 5-amino-6-(D-ribitylamino)uracil = 6,7-dimethyl-8-(1-D-ribityl)lumazine + phosphate + 2 H2O + H(+). Its pathway is cofactor biosynthesis; riboflavin biosynthesis; riboflavin from 2-hydroxy-3-oxobutyl phosphate and 5-amino-6-(D-ribitylamino)uracil: step 1/2. In terms of biological role, catalyzes the formation of 6,7-dimethyl-8-ribityllumazine by condensation of 5-amino-6-(D-ribitylamino)uracil with 3,4-dihydroxy-2-butanone 4-phosphate. This is the penultimate step in the biosynthesis of riboflavin. The chain is 6,7-dimethyl-8-ribityllumazine synthase from Methylorubrum extorquens (strain CM4 / NCIMB 13688) (Methylobacterium extorquens).